The sequence spans 510 residues: MSGETYVGAIDQGTTGTRFMVFDHDGKVVANAYEKHEQIYPEPGWVEHDANEIWDNTKQVIDAALSSAGLDAEQLEAIGITNQRETTLVWDRETGQPIHNAIVWQDRRTTDRIETLEAEGKTDDVRAKTGLEPDAYFSATKAEWLLDNSDPIKLQRSRPEDIRDRAADGELAFGTIDTWLIYNLTGNHITDVTNASRTMLFNIHDMEWDDELLDEFNVPRELLPEVRPSSDDDYYGTTDADGFLGAEVPVAGALGDQQAALFGQTCFDAGDAKNTYGTGSFMLMNTGDEAVMSEHGLLTTVGFQRSGEPVQYALEGSIFITGAAIEWLEDMTLIDNAAESEKLARSVESTDGVYFVPAFTGLGAPHWDQRARGTIVGMTRGTRREHIVRATLESIAFQTRDVAEAMESDSEIDLSSLRVDGGAVKNNFLCQLQSNILDTEIVRPQVDETTALGAAYAAGLAVGYWETLDELRENWQVDREFAPKDPQNVEHRYGRWKEAVDRSLDWAREE.

T14 contacts ADP. 2 residues coordinate ATP: T14 and T15. Residue T14 participates in sn-glycerol 3-phosphate binding. R18 lines the ADP pocket. Residues R84, E85, Y136, and D256 each contribute to the sn-glycerol 3-phosphate site. Residues R84, E85, Y136, D256, and Q257 each coordinate glycerol. T278, G322, G422, and N426 together coordinate ADP. ATP is bound by residues T278, G322, and G422.

This sequence belongs to the FGGY kinase family.

It catalyses the reaction glycerol + ATP = sn-glycerol 3-phosphate + ADP + H(+). It functions in the pathway polyol metabolism; glycerol degradation via glycerol kinase pathway; sn-glycerol 3-phosphate from glycerol: step 1/1. Key enzyme in the regulation of glycerol uptake and metabolism. Catalyzes the phosphorylation of glycerol to yield sn-glycerol 3-phosphate. It also catalyzes the phosphorylation of dihydroxyacetone (DHA). Involved, together with the DHA kinase DhaKLM, in the metabolism of DHA. In Haloferax volcanii (strain ATCC 29605 / DSM 3757 / JCM 8879 / NBRC 14742 / NCIMB 2012 / VKM B-1768 / DS2) (Halobacterium volcanii), this protein is Glycerol kinase.